The following is a 220-amino-acid chain: Adenylate kinase (220 aa).

10-15 (GSGKST) serves as a coordination point for ATP. The tract at residues 30–59 (SSGDLIRKEIAEGTPLGREMQAYLARGDLI) is NMP. AMP-binding positions include Ser-31, Arg-36, 57–59 (DLI), 83–86 (GYPR), and Gln-90. An LID region spans residues 124–161 (GRRICPKCGAVYHVEFNPPKIPGRCDVCGAELVQREDD). An ATP-binding site is contributed by Arg-125. The Zn(2+) site is built by Cys-128 and Cys-131. 134–135 (VY) lines the ATP pocket. Zn(2+) contacts are provided by Cys-148 and Cys-151. Residues Arg-158 and Arg-169 each contribute to the AMP site. Position 197 (Gly-197) interacts with ATP.

This sequence belongs to the adenylate kinase family. As to quaternary structure, monomer.

The protein localises to the cytoplasm. It catalyses the reaction AMP + ATP = 2 ADP. The protein operates within purine metabolism; AMP biosynthesis via salvage pathway; AMP from ADP: step 1/1. Its function is as follows. Catalyzes the reversible transfer of the terminal phosphate group between ATP and AMP. Plays an important role in cellular energy homeostasis and in adenine nucleotide metabolism. The polypeptide is Adenylate kinase (Pyrococcus furiosus (strain ATCC 43587 / DSM 3638 / JCM 8422 / Vc1)).